The following is a 30-amino-acid chain: 2S seed storage-like protein (30 aa).

This sequence belongs to the 2S seed storage albumins family. The mature protein is a heterodimer of a small and a large chain linked by 2 disulfide bonds. In terms of tissue distribution, extracted from castor bean.

Its function is as follows. This is a 2S seed storage protein. Inhibits spore germination in R.solani and F.oxysporum. Exhibits anti-trypsin activity. The chain is 2S seed storage-like protein from Ricinus communis (Castor bean).